A 365-amino-acid polypeptide reads, in one-letter code: Putative nudix hydrolase 1 (365 aa).

Positions 72 to 201 (VNYVAAAIIL…DFIRLVDEAV (130 aa)) constitute a Nudix hydrolase domain. Positions 109–130 (GRVEAGETIEEAVVREVKEETG) match the Nudix box motif. Mg(2+)-binding residues include glutamate 124 and glutamate 128.

Belongs to the Nudix hydrolase family. It depends on Mg(2+) as a cofactor. Mn(2+) is required as a cofactor.

Probably mediates the hydrolysis of some nucleoside diphosphate derivatives. This Caenorhabditis elegans protein is Putative nudix hydrolase 1 (ndx-1).